The following is a 159-amino-acid chain: Transcription elongation factor GreA (159 aa).

It belongs to the GreA/GreB family.

Necessary for efficient RNA polymerase transcription elongation past template-encoded arresting sites. The arresting sites in DNA have the property of trapping a certain fraction of elongating RNA polymerases that pass through, resulting in locked ternary complexes. Cleavage of the nascent transcript by cleavage factors such as GreA or GreB allows the resumption of elongation from the new 3'terminus. GreA releases sequences of 2 to 3 nucleotides. The chain is Transcription elongation factor GreA from Orientia tsutsugamushi (strain Ikeda) (Rickettsia tsutsugamushi).